The chain runs to 33 residues: Pheromone biosynthesis-activating neuropeptide (33 aa).

Positions 1 to 33 (LADDMPATMADQEVYRPEPEQIDSRNKYFSPRL) are disordered. Residues 13–26 (EVYRPEPEQIDSRN) are compositionally biased toward basic and acidic residues. Leu33 carries the post-translational modification Leucine amide.

This sequence belongs to the pyrokinin family.

It is found in the secreted. In terms of biological role, involved in the control of pheromone production in females. The polypeptide is Pheromone biosynthesis-activating neuropeptide (Lymantria dispar (Gypsy moth)).